A 471-amino-acid polypeptide reads, in one-letter code: Siroheme synthase 1 (471 aa).

Residues 1 to 203 (MEYLPLFAQL…GDTRAAEAVL (203 aa)) form a precorrin-2 dehydrogenase /sirohydrochlorin ferrochelatase region. Residues 22–23 (EV) and 43–44 (KK) each bind NAD(+). Ser-128 is modified (phosphoserine). The segment at 215-471 (GEIILVGAGP…NLRSSVVNLA (257 aa)) is uroporphyrinogen-III C-methyltransferase. Pro-224 is an S-adenosyl-L-methionine binding site. The active-site Proton acceptor is Asp-247. Catalysis depends on Lys-269, which acts as the Proton donor. S-adenosyl-L-methionine contacts are provided by residues 300 to 302 (GGD), Ile-305, 330 to 331 (TA), Met-382, and Gly-411.

This sequence in the N-terminal section; belongs to the precorrin-2 dehydrogenase / sirohydrochlorin ferrochelatase family. It in the C-terminal section; belongs to the precorrin methyltransferase family.

The catalysed reaction is uroporphyrinogen III + 2 S-adenosyl-L-methionine = precorrin-2 + 2 S-adenosyl-L-homocysteine + H(+). The enzyme catalyses precorrin-2 + NAD(+) = sirohydrochlorin + NADH + 2 H(+). It catalyses the reaction siroheme + 2 H(+) = sirohydrochlorin + Fe(2+). The protein operates within cofactor biosynthesis; adenosylcobalamin biosynthesis; precorrin-2 from uroporphyrinogen III: step 1/1. Its pathway is cofactor biosynthesis; adenosylcobalamin biosynthesis; sirohydrochlorin from precorrin-2: step 1/1. It functions in the pathway porphyrin-containing compound metabolism; siroheme biosynthesis; precorrin-2 from uroporphyrinogen III: step 1/1. It participates in porphyrin-containing compound metabolism; siroheme biosynthesis; siroheme from sirohydrochlorin: step 1/1. The protein operates within porphyrin-containing compound metabolism; siroheme biosynthesis; sirohydrochlorin from precorrin-2: step 1/1. Functionally, multifunctional enzyme that catalyzes the SAM-dependent methylations of uroporphyrinogen III at position C-2 and C-7 to form precorrin-2 via precorrin-1. Then it catalyzes the NAD-dependent ring dehydrogenation of precorrin-2 to yield sirohydrochlorin. Finally, it catalyzes the ferrochelation of sirohydrochlorin to yield siroheme. The sequence is that of Siroheme synthase 1 from Cronobacter sakazakii (strain ATCC BAA-894) (Enterobacter sakazakii).